Consider the following 503-residue polypeptide: ATP synthase subunit alpha (503 aa).

G170 to T177 is a binding site for ATP.

The protein belongs to the ATPase alpha/beta chains family. As to quaternary structure, F-type ATPases have 2 components, CF(1) - the catalytic core - and CF(0) - the membrane proton channel. CF(1) has five subunits: alpha(3), beta(3), gamma(1), delta(1), epsilon(1). CF(0) has three main subunits: a(1), b(2) and c(9-12). The alpha and beta chains form an alternating ring which encloses part of the gamma chain. CF(1) is attached to CF(0) by a central stalk formed by the gamma and epsilon chains, while a peripheral stalk is formed by the delta and b chains.

It is found in the cell membrane. The enzyme catalyses ATP + H2O + 4 H(+)(in) = ADP + phosphate + 5 H(+)(out). Functionally, produces ATP from ADP in the presence of a proton gradient across the membrane. The alpha chain is a regulatory subunit. The sequence is that of ATP synthase subunit alpha from Brevibacillus brevis (strain 47 / JCM 6285 / NBRC 100599).